Reading from the N-terminus, the 431-residue chain is Histidinol dehydrogenase (431 aa).

Positions 127, 185, and 208 each coordinate NAD(+). 3 residues coordinate substrate: Ser234, Gln256, and His259. Residues Gln256 and His259 each coordinate Zn(2+). Residues Glu323 and His324 each act as proton acceptor in the active site. Substrate contacts are provided by His324, Asp357, Glu411, and His416. Asp357 provides a ligand contact to Zn(2+). His416 contacts Zn(2+).

The protein belongs to the histidinol dehydrogenase family. Zn(2+) is required as a cofactor.

It catalyses the reaction L-histidinol + 2 NAD(+) + H2O = L-histidine + 2 NADH + 3 H(+). It participates in amino-acid biosynthesis; L-histidine biosynthesis; L-histidine from 5-phospho-alpha-D-ribose 1-diphosphate: step 9/9. Functionally, catalyzes the sequential NAD-dependent oxidations of L-histidinol to L-histidinaldehyde and then to L-histidine. The polypeptide is Histidinol dehydrogenase (Vibrio vulnificus (strain YJ016)).